A 446-amino-acid polypeptide reads, in one-letter code: D(1A) dopamine receptor (446 aa).

Residues 1–23 (MRTLNTSTMDGTGLVVERDFSFR) are Extracellular-facing. The N-linked (GlcNAc...) asparagine glycan is linked to Asn5. A helical membrane pass occupies residues 24-49 (ILTACFLSLLILSTLLGNTLVCAAVI). Topologically, residues 50-60 (RFRHLRSKVTN) are cytoplasmic. A helical membrane pass occupies residues 61–87 (FFVISLAVSDLLVAVLVMPWKAVAEIA). The Extracellular segment spans residues 88–96 (GFWPFGSFC). Cys96 and Cys186 are oxidised to a cystine. A helical transmembrane segment spans residues 97 to 119 (NIWVAFDIMCSTASILNLCVISV). The Cytoplasmic portion of the chain corresponds to 120-138 (DRYWAISSPFRYERKMTPK). The chain crosses the membrane as a helical span at residues 139–163 (AAFILISVAWTLSVLISFIPVQLSW). Residues 164–192 (HKAKPTSPSDGNVTSLGKTTHNCDSSLSR) are Extracellular-facing. Residues 193-218 (TYAISSSLISFYIPVAIMIVTYTRIY) form a helical membrane-spanning segment. The Cytoplasmic portion of the chain corresponds to 219-272 (RIAQKQIRRISALERAAVHAKNCQTTAGNGNPAECSQPESSFKMSFKRETKVLK). A helical membrane pass occupies residues 273-299 (TLSVIMGVFVCCWLPFFILNCMVPFCG). Topologically, residues 300–312 (SGETKPFCIDSIT) are extracellular. Residues 313 to 337 (FDVFVWFGWANSSLNPIIYAFNADF) form a helical membrane-spanning segment. Over 338 to 446 (RKAFSTLLGC…PITQNGQHPT (109 aa)) the chain is Cytoplasmic. S-palmitoyl cysteine attachment occurs at residues Cys347 and Cys351.

This sequence belongs to the G-protein coupled receptor 1 family. Interacts with DNAJC14 via its C-terminus. Interacts with DRD2. Interacts with DORIP1.

It localises to the cell membrane. The protein resides in the endoplasmic reticulum membrane. The protein localises to the cell projection. It is found in the cilium membrane. Its subcellular location is the dendrite. It localises to the dendritic spine. Functionally, dopamine receptor whose activity is mediated by G proteins which activate adenylyl cyclase. The polypeptide is D(1A) dopamine receptor (DRD1) (Sus scrofa (Pig)).